A 288-amino-acid chain; its full sequence is MARNSDNDMCKEERKRESFFKVLQRVDISSENMRALPYDFVRSFSNNELSRKMKIKARWGSSWEVEICKNPRFYFMEKSGWEKFVSDNALGASEFLTFTHKGNMRFTVNIFMQDGKEMLQPPQSMSFMASSRPPKREQGIPSLATTIAAESNGGGNYKRKLNFEKKKAEESHNSKRTDKVFSVQRESAGASSSSVAEFSMFIKKSYLIYMWFPKSVQSIHMPKQRTIFKIHHPNMKKSWNVVYVVSGTKSSFSAGWKGLAQEYPLAVGDTCKFSFIKQHELILFVSKP.

2 consecutive DNA-binding regions (TF-B3) follow at residues F19–D114 and A196–P288.

Its subcellular location is the nucleus. This Arabidopsis thaliana (Mouse-ear cress) protein is B3 domain-containing protein At2g35310.